The chain runs to 298 residues: ADP/ATP translocase 1 (298 aa).

Residues 1–7 lie on the Mitochondrial intermembrane side of the membrane; that stretch reads MGDQALS. Gly2 carries the N-acetylglycine modification. The stretch at 6–98 is one Solcar 1 repeat; the sequence is LSFLKDFLAG…FAFKDKYKQI (93 aa). Phosphoserine is present on Ser7. The chain crosses the membrane as a helical span at residues 8–37; that stretch reads FLKDFLAGGIAAAVSKTAVAPIERVKLLLQ. At 38-74 the chain is on the mitochondrial matrix side; it reads VQHASKQISAEKQYKGIIDCVVRIPKEQGFLSFWRGN. Residue Lys52 is modified to N6,N6,N6-trimethyllysine. The helical transmembrane segment at 75-99 threads the bilayer; the sequence is LANVIRYFPTQALNFAFKDKYKQIF. 2 residues coordinate ADP: Arg80 and Lys92. The Mitochondrial intermembrane segment spans residues 100–109; sequence LGGVDRHKQF. A helical transmembrane segment spans residues 110–130; it reads WRYFAGNLASGGAAGATSLCF. 2 Solcar repeats span residues 111-201 and 212-297; these read RYFA…AKGM and VSWM…IKKY. Residues 131-178 are Mitochondrial matrix-facing; it reads VYPLDFARTRLAADVGKGSSQREFNGLGDCLTKIFKSDGLKGLYQGFS. At Lys147 the chain carries N6-succinyllysine. Ser149 and Ser150 each carry phosphoserine. The residue at position 160 (Cys160) is an S-nitrosocysteine. The helical transmembrane segment at 179–199 threads the bilayer; the sequence is VSVQGIIIYRAAYFGVYDTAK. The Mitochondrial intermembrane portion of the chain corresponds to 200–210; sequence GMLPDPKNVHI. A helical transmembrane segment spans residues 211-231; sequence IVSWMIAQSVTAVAGLVSYPF. Topologically, residues 232-273 are mitochondrial matrix; the sequence is DTVRRRMMMQSGRKGADIMYTGTVDCWRKIAKDEGRKAFFKG. An ADP-binding site is contributed by Arg235. The tract at residues 235–240 is important for transport activity; sequence RRRMMM. Residues 235–240 carry the Nucleotide carrier signature motif motif; the sequence is RRRMMM. N6-succinyllysine occurs at positions 245 and 272. Residues 274–291 traverse the membrane as a helical segment; the sequence is AWSNVLRGMGGAFVLVLY. The Mitochondrial intermembrane segment spans residues 292–298; that stretch reads DEIKKYV.

The protein belongs to the mitochondrial carrier (TC 2.A.29) family. In terms of assembly, monomer. Found in a complex with ARL2, ARL2BP and SLC25A4/ANT1. Interacts with ARL2BP. Interacts with TIMM44; leading to inhibit the presequence translocase TIMM23, thereby promoting stabilization of PINK1. Post-translationally, under cell death induction, transglutaminated by TGM2. Transglutamination leads to formation of covalent cross-links between a glutamine and the epsilon-amino group of a lysine residue, forming polymers.

It is found in the mitochondrion inner membrane. The protein resides in the membrane. The enzyme catalyses ADP(in) + ATP(out) = ADP(out) + ATP(in). The catalysed reaction is H(+)(in) = H(+)(out). With respect to regulation, the matrix-open state (m-state) is inhibited by the membrane-permeable bongkrekic acid (BKA). The cytoplasmic-open state (c-state) is inhibited by the membrane-impermeable toxic inhibitor carboxyatractyloside (CATR). Proton transporter activity is inhibited by ADP:ATP antiporter activity. ADP:ATP antiporter that mediates import of ADP into the mitochondrial matrix for ATP synthesis, and export of ATP out to fuel the cell. Cycles between the cytoplasmic-open state (c-state) and the matrix-open state (m-state): operates by the alternating access mechanism with a single substrate-binding site intermittently exposed to either the cytosolic (c-state) or matrix (m-state) side of the inner mitochondrial membrane. In addition to its ADP:ATP antiporter activity, also involved in mitochondrial uncoupling and mitochondrial permeability transition pore (mPTP) activity. Plays a role in mitochondrial uncoupling by acting as a proton transporter: proton transport uncouples the proton flows via the electron transport chain and ATP synthase to reduce the efficiency of ATP production and cause mitochondrial thermogenesis. Proton transporter activity is inhibited by ADP:ATP antiporter activity, suggesting that SLC25A4/ANT1 acts as a master regulator of mitochondrial energy output by maintaining a delicate balance between ATP production (ADP:ATP antiporter activity) and thermogenesis (proton transporter activity). Proton transporter activity requires free fatty acids as cofactor, but does not transport it. Also plays a key role in mPTP opening, a non-specific pore that enables free passage of the mitochondrial membranes to solutes of up to 1.5 kDa, and which contributes to cell death. It is however unclear if SLC25A4/ANT1 constitutes a pore-forming component of mPTP or regulates it. Acts as a regulator of mitophagy independently of ADP:ATP antiporter activity: promotes mitophagy via interaction with TIMM44, leading to inhibit the presequence translocase TIMM23, thereby promoting stabilization of PINK1. The polypeptide is ADP/ATP translocase 1 (Rattus norvegicus (Rat)).